The sequence spans 1101 residues: MTYPVSAAAPADISYSKNTPLVGLSKPPCLYQHASSSVDSFSSTFSDDDRSDLVAVPNESPHAFSYNPISPNSLGVRLTILRRSLEIMVNSPDILHELKKKAPVIAYPPSLRHTRNLTETATLSASRDPLNGSLISPLVSNMPSPASRPVIQRATSLMVLPDNDTASKLNPAKSELENLLFLLNLALENNSFERASDLHMLSLLNIKKINFDSDIQKSETLKKVLLDSLAEPFFENYKKFPHKDLGSKSQYNEYEEKHDDIVSLADIKPQQDYSRILHPFTSAKNSGPEAIFTCSQQYPWNFKAANDLACLTFGISKNVIKALTLLDLIHTDSRNFVLEKIMNAEDDNQEIVFTGETIPIVQPNSTSNNNVPNLIWASLWAKRKNGLLVCVFEKTPCDYIDVMLNLRDFSVDSIIDTTHFLENFDKKKQQESTSPMTEKKTVKFANEIHDIGSVSHSLSKLIDDVRFGKVFSADDDLLPLSIRVANHVNEERYFTLNCLSENIPCAVTTSVLENEIKLKIHSLPYQAGLFIVDSHTLSLLSFNKSVAKNMFGLRLHELAGSSVTKLVPSLADMISYINKTYPMLNITLPENKGLVLTEHFFRKIEAEMHHDKDSFYTSIGLDGCHKDGNLIKVDVQLRVLNTNAVLLWITHSRDVVIENYTTVPSQLPMLKENEIDVVGSRGSSSASSKKSSEKIPVNTLKAMADLSISSAETISNSDDEVDLNQVNEKLRETSCGKVRGIESNDNNNYDDDMTMVDDPELKHKIELTKMYTQDKSKFVKDDNFKVDEKFIMRIIEPINGEEIKKETNELDKRNSTLKATYLTTPEANIGSQKRIKKFSDFTILQVMGEGAYGKVNLCIHNREHYIVVIKMIFKERILVDTWVRDRKLGTIPSEIQIMATLNKNSQENILKLLDFFEDDDYYYIETPVHGETGSIDLFDVIEFKKDMVEHEAKLVFKQVVASIKHLHDQGIVHRDIKDENVIVDSHGFVKLIDFGSAAYIKSGPFDVFVGTMDYAAPEVLGGSSYKGKPQDIWALGVLLYTIIYKENPYYNIDEILEGELRFDKSEHVSEECISLIKRILTREVDKRPTIDEIYEDKWLKI.

Position 118 is a phosphothreonine (Thr-118). The Protein kinase domain occupies 841-1099 (FTILQVMGEG…IDEIYEDKWL (259 aa)). ATP-binding positions include 847–855 (MGEGAYGKV) and Lys-870. The active-site Proton acceptor is Asp-975.

This sequence belongs to the protein kinase superfamily. Ser/Thr protein kinase family.

It localises to the cytoplasm. The enzyme catalyses L-seryl-[protein] + ATP = O-phospho-L-seryl-[protein] + ADP + H(+). The catalysed reaction is L-threonyl-[protein] + ATP = O-phospho-L-threonyl-[protein] + ADP + H(+). Its function is as follows. Serine/threonine-protein kinase involved in the control of sugar metabolism and translation. Phosphorylates UGP1, which is required for normal glycogen and beta-(1,6)-glucan synthesis. This phosphorylation shifts glucose partitioning toward cell wall glucan synthesis at the expense of glycogen synthesis. Also phosphorylates the glycogen synthase GSY2 and the translation factors CAF20, TIF11 and SRO9. This Saccharomyces cerevisiae (strain ATCC 204508 / S288c) (Baker's yeast) protein is Serine/threonine-protein kinase PSK2 (PSK2).